A 489-amino-acid polypeptide reads, in one-letter code: Long chain base biosynthesis protein 2a (489 aa).

A helical membrane pass occupies residues 2–22 (ITIPYLTAVSTYFSYGLLFAF). An N6-(pyridoxal phosphate)lysine modification is found at lysine 311.

This sequence belongs to the class-II pyridoxal-phosphate-dependent aminotransferase family. As to quaternary structure, heterodimer with LCB1. Component of the serine palmitoyltransferase (SPT) complex, composed of LCB1 and LCB2 (LCB2a or LCB2b). The cofactor is pyridoxal 5'-phosphate. As to expression, ubiquitous. Detected in leaves, roots, stems, flowers and at a lower level in mature seeds.

The protein localises to the endoplasmic reticulum membrane. The catalysed reaction is L-serine + hexadecanoyl-CoA + H(+) = 3-oxosphinganine + CO2 + CoA. It functions in the pathway lipid metabolism; sphingolipid metabolism. Functionally, serine palmitoyltransferase (SPT). The heterodimer formed with LCB1 constitutes the catalytic core. Involved in the regulation of the programmed cell death (PCD) signaling pathway. Plays an important role during male gametogenesis and embryogenesis. In Arabidopsis thaliana (Mouse-ear cress), this protein is Long chain base biosynthesis protein 2a (LCB2a).